Reading from the N-terminus, the 486-residue chain is Elastin-binding protein EbpS (486 aa).

The span at 1–40 (MSNNFKDDFEKNRQSIDTNSHQDHTEDVEKDQSELEHQDT) shows a compositional bias: basic and acidic residues. Residues 1–314 (MSNNFKDDFE…NHDRDKERKK (314 aa)) form a disordered region. Topologically, residues 2–204 (SNNFKDDFEK…ESKDHHSGKK (203 aa)) are extracellular. The elastin-binding stretch occupies residues 14 to 34 (QSIDTNSHQDHTEDVEKDQSE). The segment covering 64 to 85 (TNHNKQVHNESQTSEDNVQNEA) has biased composition (polar residues). Basic and acidic residues-rich tracts occupy residues 103–118 (EPSH…EEYY), 126–160 (DKSH…KSEA), and 180–199 (SKDK…SKDH). 2 stretches are compositionally biased toward low complexity: residues 204 to 225 (KGAA…MGVS) and 233 to 246 (DAQN…SNNS). The helical transmembrane segment at 205–225 (GAAIGAGTAGVAGAAGAMGVS) threads the bilayer. Over 226–319 (KAKKHSNDAQ…KERKKGGMAK (94 aa)) the chain is Cytoplasmic. The span at 247 to 259 (TEDKVSQDKSKDH) shows a compositional bias: basic and acidic residues. The span at 278-297 (GAASKSASAASKPHASNNAS) shows a compositional bias: low complexity. Residues 299 to 314 (NHDEHDNHDRDKERKK) are compositionally biased toward basic and acidic residues. A helical membrane pass occupies residues 320–340 (VLLPLIAAVLIIGALAIFGGM). Over 341-486 (ALNNHNNGTK…IRNGQQIVIP (146 aa)) the chain is Extracellular. Residues 351–440 (ENKIANTNKN…QRQGGGQRHT (90 aa)) are disordered. Positions 361-398 (NADESKDKDTSKDASKDKSKSTDSDKSKEDQDKATKDE) are enriched in basic and acidic residues. Over residues 403 to 431 (QNNANQANNQAQNNQNQQQANQNQQQQQQ) the composition is skewed to low complexity. A LysM domain is found at 437 to 485 (QRHTVNGQENLYRIAIQYYGSGSPENVEKIRRANGLSGNNIRNGQQIVI).

It localises to the cell membrane. Functionally, promotes binding of soluble elastin peptides and tropoelastin to S.aureus cells although it is not able to promote bacterial adherence to immobilized elastin and, therefore, is not a microbial surface component recognizing adhesive matrix molecule (MSCRAMM). The chain is Elastin-binding protein EbpS (ebpS) from Staphylococcus aureus (strain MSSA476).